The primary structure comprises 602 residues: Sodium- and chloride-dependent GABA transporter 2 (602 aa).

Over 1–40 (MDNRVSGTTSNGETKPVCPVMEKVEEDGTLEREQWTNKME) the chain is Cytoplasmic. Transmembrane regions (helical) follow at residues 41–61 (FVLSVAGEIIGLGNVWRFPYL), 68–88 (GAFFIPYLIFLFTCGIPVFFL), and 121–141 (IVSLLNVYYIVVLAWALFYLF). Residues 142 to 206 (SSFTTDLPWG…GIQHLGSLRW (65 aa)) lie on the Extracellular side of the membrane. A disulfide bridge connects residues Cys-153 and Cys-162. Residues Asn-169, Asn-173, and Asn-178 are each glycosylated (N-linked (GlcNAc...) asparagine). Helical transmembrane passes span 207 to 227 (ELVLCLLLAWIICYFCIWKGV) and 233 to 253 (VVYFTATFPYLMLVVLLIRGV). An N-linked (GlcNAc...) asparagine glycan is attached at Asn-269. The next 7 membrane-spanning stretches (helical) occupy residues 282–302 (AGTQIFFSFAICLGCLTALGS), 319–339 (ILNSSTSFVAGFAIFSILGFM), 366–386 (VVMLPFSPLWACCFFFMVVLL), 418–438 (ILILIVSVVSFFIGLIMLTEG), 453–473 (GMCLLFVAIFESLCVAWVYGA), 490–510 (PLIKYCWLFFTPAVCLATFLF), and 528–548 (WWGDALGWLLALSSMVCIPAW). At 549 to 602 (SIYKLRTLKGPLRERLRQLVCPAEDLPQKSQPELTSPATPMTSLLRLTELESNC) the chain is on the cytoplasmic side. Residue Thr-587 is modified to Phosphothreonine. Residue Ser-591 is modified to Phosphoserine.

Belongs to the sodium:neurotransmitter symporter (SNF) (TC 2.A.22) family. SLC6A13 subfamily. In terms of tissue distribution, brain, retina, and peripheral tissues. Expressed in hepatocytes (at protein level).

It is found in the cell membrane. Its subcellular location is the basolateral cell membrane. It carries out the reaction 4-aminobutanoate(out) + chloride(out) + 2 Na(+)(out) = 4-aminobutanoate(in) + chloride(in) + 2 Na(+)(in). The enzyme catalyses taurine(out) + chloride(out) + 2 Na(+)(out) = taurine(in) + chloride(in) + 2 Na(+)(in). It catalyses the reaction beta-alanine(out) + chloride(out) + 2 Na(+)(out) = beta-alanine(in) + chloride(in) + 2 Na(+)(in). The catalysed reaction is hypotaurine(out) + chloride(out) + 2 Na(+)(out) = hypotaurine(in) + chloride(in) + 2 Na(+)(in). GABA transport is inhibited by beta-alanine, L-2,4-Diaminobutyric acid, hypotaurine and nipecotic acid. Taurine transport is inhibited by hypotaurine, beta-alanine and nipecotic acid. In terms of biological role, mediates sodium- and chloride-dependent transport of gamma-aminobutyric acid (GABA). Mediates transport of taurine and is the major taurine transporter in hepatocytes. Can also mediate transport of beta-alanine and hypotaurine. This chain is Sodium- and chloride-dependent GABA transporter 2 (Slc6a13), found in Rattus norvegicus (Rat).